The following is a 194-amino-acid chain: uncharacterized protein (194 aa).

Disordered regions lie at residues 1-21 (MPKG…APPL) and 73-97 (PATV…PWPS). A compositionally biased stretch (pro residues) spans 73-96 (PATVPPPPPGLGPPSERPCPPPWP).

This is an uncharacterized protein from Mus musculus (Mouse).